The primary structure comprises 368 residues: Phospho-N-acetylmuramoyl-pentapeptide-transferase (368 aa).

Transmembrane regions (helical) follow at residues 30-50 (AAAITALLITLFVGPGFIKYL), 72-92 (LPTMGGLLIIFSIEISVLLWS), 95-115 (IDPHVWLIMLAILWMGIIGFI), 139-159 (VTLGLVVGCYTWYDPSFSVLL), 169-189 (YLTIDYGYFYIPIVIFIITAV), 208-228 (AIVVMGLGGFSYLAGNAVYAV), 238-258 (GGEIAVVSMAIVMACVGFLWF), 264-286 (EIIMGDTGSLALGSAIAVIALLI), and 345-365 (KIVIRFWILTILFFLASLMTL).

Belongs to the glycosyltransferase 4 family. MraY subfamily. Mg(2+) serves as cofactor.

The protein resides in the cell inner membrane. It carries out the reaction UDP-N-acetyl-alpha-D-muramoyl-L-alanyl-gamma-D-glutamyl-meso-2,6-diaminopimeloyl-D-alanyl-D-alanine + di-trans,octa-cis-undecaprenyl phosphate = di-trans,octa-cis-undecaprenyl diphospho-N-acetyl-alpha-D-muramoyl-L-alanyl-D-glutamyl-meso-2,6-diaminopimeloyl-D-alanyl-D-alanine + UMP. It participates in cell wall biogenesis; peptidoglycan biosynthesis. In terms of biological role, catalyzes the initial step of the lipid cycle reactions in the biosynthesis of the cell wall peptidoglycan: transfers peptidoglycan precursor phospho-MurNAc-pentapeptide from UDP-MurNAc-pentapeptide onto the lipid carrier undecaprenyl phosphate, yielding undecaprenyl-pyrophosphoryl-MurNAc-pentapeptide, known as lipid I. This chain is Phospho-N-acetylmuramoyl-pentapeptide-transferase, found in Pelodictyon phaeoclathratiforme (strain DSM 5477 / BU-1).